Consider the following 318-residue polypeptide: Guanidinopropionase (318 aa).

The Mn(2+) site is built by His-126, Asp-148, His-150, Asp-152, Asp-240, and Asp-242.

This sequence belongs to the arginase family. Agmatinase subfamily. Homohexamer. Mn(2+) serves as cofactor.

It catalyses the reaction 3-guanidinopropanoate + H2O = urea + beta-alanine. Functionally, catalyzes the hydrolysis of 3-guanidinopropanoate to beta-alanine and urea. Possesses low activity against 4-guanidinobutanoate. Has no activity against arginine and agmatine. This is Guanidinopropionase (gpuA) from Pseudomonas aeruginosa (strain ATCC 15692 / DSM 22644 / CIP 104116 / JCM 14847 / LMG 12228 / 1C / PRS 101 / PAO1).